A 515-amino-acid chain; its full sequence is Na(+)/H(+) antiporter NhaB (515 aa).

A run of 13 helical transmembrane segments spans residues 23 to 43, 44 to 64, 88 to 108, 119 to 139, 143 to 163, 202 to 222, 238 to 258, 303 to 323, 324 to 344, 357 to 377, 389 to 409, 447 to 467, and 477 to 497; these read IIVFLILNPILYFLISPFIAG, WCLVIEFIFTLAMALKCYPLQ, IMASFEVILLLMFMVAGIYFM, LLITVRSKIVLSLSFCLSAAF, FLDALTVVAVIISVVMGFYGV, LMMHAGVGTALGGVMTLVGEP, FFIRMAPVTVPVLICGLITCV, GIIGIWLVCGLAFHLAAVGLI, GLSVIVLTTAFCGITSESTIG, LVVFFSVVAVIIDQHLFGPII, LLLFYGFNGLLSAISDNVFVA, ATPNGQAAFLFLLTSSLAPLI, and MALPYTIVLTVVGLLAVEYIL.

It belongs to the NhaB Na(+)/H(+) (TC 2.A.34) antiporter family.

Its subcellular location is the cell inner membrane. It catalyses the reaction 2 Na(+)(in) + 3 H(+)(out) = 2 Na(+)(out) + 3 H(+)(in). Its function is as follows. Na(+)/H(+) antiporter that extrudes sodium in exchange for external protons. In Mannheimia succiniciproducens (strain KCTC 0769BP / MBEL55E), this protein is Na(+)/H(+) antiporter NhaB.